A 356-amino-acid chain; its full sequence is MNAARTGYRVFSANSTAACTELAKRITERLGAELGKSVVYQETNGETRVEIKESVRGQDIFIIQTIPRDVNTAVMELLIMAYALKTACARNIIGVIPYFPYSKQSKMRKRGSIVCKLLASMLAKAGLTHIITMDLHQKEIQGFFSFPVDNLRASPFLLQYIQEEIPNYRNAVIVAKSPDAAKRAQSYAERLRLGLAVIHGEAQCTELDMDDGRHSPPMVKNATVHPGLELPLMMAKEKPPITVVGDVGGRIAIIVDDIIDDVESFVAAAEILKERGAYKIYVMATHGILSAEAPRLIEESPIDEVVVTNTVPHELQKLQCPKIKTVDISLILSEAIRRIHNGESMAYLFRNITVDD.

An N-acetylmethionine modification is found at M1. Phosphoserine occurs at positions 177 and 215.

The protein belongs to the ribose-phosphate pyrophosphokinase family. In terms of assembly, binds to PRPS1 and PRPS2.

Seems to play a negative regulatory role in 5-phosphoribose 1-diphosphate synthesis. The chain is Phosphoribosyl pyrophosphate synthase-associated protein 1 (Prpsap1) from Mus musculus (Mouse).